A 734-amino-acid chain; its full sequence is Mechanosensitive ion channel protein 10 (734 aa).

Disordered regions lie at residues 1 to 75 and 115 to 136; these read MAEQ…LTQR and SFSR…APVT. Residues 24–39 show a composition bias toward basic and acidic residues; the sequence is EASRRSKEMASPESEK. S34 carries the post-translational modification Phosphoserine. Polar residues-rich tracts occupy residues 65-75 and 117-129; these read PNQNNVGLTQR and SRAS…NRSV. Residues S128 and S131 each carry the phosphoserine modification. Transmembrane regions (helical) follow at residues 164-184, 196-216, 249-269, 288-308, 516-536, and 551-571; these read ISTL…ALVA, FWGL…SGML, SVQV…LFNH, LISI…LKIL, LVTA…LEVA, and LAFI…FVFV.

The protein belongs to the MscS (TC 1.A.23) family. In terms of tissue distribution, detected in the root tip and throughout the vasculature of the root and leaf.

The protein localises to the cell membrane. Mechanosensitive channel that opens in response to stretch forces in the membrane lipid bilayer. In Arabidopsis thaliana (Mouse-ear cress), this protein is Mechanosensitive ion channel protein 10 (MSL10).